Here is a 633-residue protein sequence, read N- to C-terminus: Threonine--tRNA ligase (633 aa).

The editing domain stretch occupies residues 1–143 (MRALFLHSNR…SRTIKPKKVK (143 aa)). Catalytic regions lie at residues 220–515 (NPLN…PVLP) and 221–515 (PLND…PVLP). Zn(2+) contacts are provided by Cys-314, His-365, and His-488.

This sequence belongs to the class-II aminoacyl-tRNA synthetase family. As to quaternary structure, homodimer. Zn(2+) is required as a cofactor.

The protein localises to the cytoplasm. The catalysed reaction is tRNA(Thr) + L-threonine + ATP = L-threonyl-tRNA(Thr) + AMP + diphosphate + H(+). Catalyzes the attachment of threonine to tRNA(Thr) in a two-step reaction: L-threonine is first activated by ATP to form Thr-AMP and then transferred to the acceptor end of tRNA(Thr). Also edits incorrectly charged L-seryl-tRNA(Thr). The sequence is that of Threonine--tRNA ligase from Nanoarchaeum equitans (strain Kin4-M).